We begin with the raw amino-acid sequence, 247 residues long: Mycofactocin precursor peptide peptidase (247 aa).

A divalent metal cation contacts are provided by Glu-38, His-40, Asp-49, His-124, and Glu-163.

Belongs to the creatininase superfamily. In terms of assembly, homooctamer. It depends on Fe(2+) as a cofactor. Zn(2+) serves as cofactor.

It carries out the reaction [mycofactocin precursor peptide]-C-terminal glycyl-N-{5-[(4-hydroxyphenyl)methyl]-4,4-dimethyl-2-oxopyrrolidin-3-yl}acetamide + H2O = [mycofactocin precursor peptide]-C-terminal glycine + 3-amino-5-[(4-hydroxyphenyl)methyl]-4,4-dimethyl-2-pyrrolidin-2-one. Functionally, peptidase involved in the biosynthesis of the enzyme cofactor mycofactocin (MFT). Catalyzes cleavage of the MftC-modified MftA peptide to liberate its final two residues, which consist of a cross-linked valine-decarboxylated tyrosine dipeptide (named 3-amino-5-[(4-hydroxyphenyl)methyl]-4,4-dimethyl-2-pyrrolidin-2-one or ADHP). Is required for the in vivo ethanol assimilation in M.smegmatis. The chain is Mycofactocin precursor peptide peptidase from Mycolicibacterium smegmatis (strain ATCC 700084 / mc(2)155) (Mycobacterium smegmatis).